Here is a 228-residue protein sequence, read N- to C-terminus: Probable U3 small nucleolar RNA-associated protein 11 (228 aa).

Disordered regions lie at residues 1–23 (MSSL…EARK) and 192–211 (SMQK…DDEL). The span at 12–23 (AHKERSQPEARK) shows a compositional bias: basic and acidic residues.

Belongs to the UTP11 family. Component of the ribosomal small subunit (SSU) processome.

It localises to the nucleus. The protein localises to the nucleolus. Involved in nucleolar processing of pre-18S ribosomal RNA. The sequence is that of Probable U3 small nucleolar RNA-associated protein 11 from Arabidopsis thaliana (Mouse-ear cress).